The primary structure comprises 1372 residues: DNA-directed RNA polymerase subunit beta' (1372 aa).

Positions 69, 71, 84, and 87 each coordinate Zn(2+). 3 residues coordinate Mg(2+): Asp460, Asp462, and Asp464. 4 residues coordinate Zn(2+): Cys808, Cys882, Cys889, and Cys892.

This sequence belongs to the RNA polymerase beta' chain family. In terms of assembly, the RNAP catalytic core consists of 2 alpha, 1 beta, 1 beta' and 1 omega subunit. When a sigma factor is associated with the core the holoenzyme is formed, which can initiate transcription. Requires Mg(2+) as cofactor. Zn(2+) serves as cofactor.

It catalyses the reaction RNA(n) + a ribonucleoside 5'-triphosphate = RNA(n+1) + diphosphate. Its function is as follows. DNA-dependent RNA polymerase catalyzes the transcription of DNA into RNA using the four ribonucleoside triphosphates as substrates. The chain is DNA-directed RNA polymerase subunit beta' from Rickettsia prowazekii (strain Madrid E).